Reading from the N-terminus, the 61-residue chain is Small ribosomal subunit protein uS14 (61 aa).

Residues Cys24, Cys27, Cys40, and Cys43 each coordinate Zn(2+).

The protein belongs to the universal ribosomal protein uS14 family. Zinc-binding uS14 subfamily. As to quaternary structure, part of the 30S ribosomal subunit. Contacts proteins S3 and S10. Zn(2+) is required as a cofactor.

Functionally, binds 16S rRNA, required for the assembly of 30S particles and may also be responsible for determining the conformation of the 16S rRNA at the A site. The polypeptide is Small ribosomal subunit protein uS14 (Borrelia garinii subsp. bavariensis (strain ATCC BAA-2496 / DSM 23469 / PBi) (Borreliella bavariensis)).